Reading from the N-terminus, the 111-residue chain is Large ribosomal subunit protein uL24 (111 aa).

The protein belongs to the universal ribosomal protein uL24 family. Part of the 50S ribosomal subunit.

Functionally, one of two assembly initiator proteins, it binds directly to the 5'-end of the 23S rRNA, where it nucleates assembly of the 50S subunit. Its function is as follows. One of the proteins that surrounds the polypeptide exit tunnel on the outside of the subunit. The polypeptide is Large ribosomal subunit protein uL24 (Chlamydia trachomatis serovar A (strain ATCC VR-571B / DSM 19440 / HAR-13)).